We begin with the raw amino-acid sequence, 336 residues long: Thiamine thiazole synthase (336 aa).

Substrate-binding positions include A89, 110-111 (ES), G118, and C183. C219 bears the 2,3-didehydroalanine (Cys) mark. Substrate contacts are provided by residues D221, H236, M288, and 298–300 (RMG).

Belongs to the THI4 family. As to quaternary structure, homooctamer. The cofactor is Fe cation. In terms of processing, during the catalytic reaction, a sulfide is transferred from Cys-219 to a reaction intermediate, generating a dehydroalanine residue.

It is found in the cytoplasm. The protein resides in the nucleus. It carries out the reaction [ADP-thiazole synthase]-L-cysteine + glycine + NAD(+) = [ADP-thiazole synthase]-dehydroalanine + ADP-5-ethyl-4-methylthiazole-2-carboxylate + nicotinamide + 3 H2O + 2 H(+). Its function is as follows. Involved in biosynthesis of the thiamine precursor thiazole. Catalyzes the conversion of NAD and glycine to adenosine diphosphate 5-(2-hydroxyethyl)-4-methylthiazole-2-carboxylic acid (ADT), an adenylated thiazole intermediate. The reaction includes an iron-dependent sulfide transfer from a conserved cysteine residue of the protein to a thiazole intermediate. The enzyme can only undergo a single turnover, which suggests it is a suicide enzyme. May have additional roles in adaptation to various stress conditions and in DNA damage tolerance. The protein is Thiamine thiazole synthase of Puccinia graminis f. sp. tritici (strain CRL 75-36-700-3 / race SCCL) (Black stem rust fungus).